Consider the following 59-residue polypeptide: SPbeta prophage-derived uncharacterized protein YosB (59 aa).

In Bacillus subtilis (strain 168), this protein is SPbeta prophage-derived uncharacterized protein YosB (yosB).